A 382-amino-acid polypeptide reads, in one-letter code: Alcohol dehydrogenase 1 (382 aa).

Zn(2+)-binding residues include Cys49, Thr51, His71, Cys101, Cys104, Cys107, Cys115, and Cys179. Residues Thr51 and His71 each contribute to the an alcohol site. An NAD(+)-binding site is contributed by Thr51. NAD(+) is bound by residues 204–209 (GLGAVG), Asp228, Arg233, Thr275, Val298, 298–300 (VGV), Phe325, and Arg375.

Belongs to the zinc-containing alcohol dehydrogenase family. As to quaternary structure, homodimer. Zn(2+) serves as cofactor.

It localises to the cytoplasm. The enzyme catalyses a primary alcohol + NAD(+) = an aldehyde + NADH + H(+). It catalyses the reaction a secondary alcohol + NAD(+) = a ketone + NADH + H(+). Functionally, this protein is responsible for the conversion of alcohols to aldehydes in plants and is important for NAD metabolism during anaerobic respiration. This is Alcohol dehydrogenase 1 (ADH1) from Petunia hybrida (Petunia).